A 586-amino-acid chain; its full sequence is Arginine--tRNA ligase (586 aa).

The 'HIGH' region signature appears at 133–143 (ANPTGPLNIVS).

This sequence belongs to the class-I aminoacyl-tRNA synthetase family. In terms of assembly, monomer.

It localises to the cytoplasm. It catalyses the reaction tRNA(Arg) + L-arginine + ATP = L-arginyl-tRNA(Arg) + AMP + diphosphate. The sequence is that of Arginine--tRNA ligase from Leptospira borgpetersenii serovar Hardjo-bovis (strain JB197).